The chain runs to 198 residues: Protein uvp1 (198 aa).

Residues 1 to 140 (MIIGYARKST…SGLAAARARG (140 aa)) enclose the Resolvase/invertase-type recombinase catalytic domain. Residue Ser-9 is the O-(5'-phospho-DNA)-serine intermediate of the active site. Residues 168–187 (VGAVAKRFNVSRMTIYRYTT) constitute a DNA-binding region (H-T-H motif).

It belongs to the site-specific recombinase resolvase family.

In terms of biological role, cooperates with the mucAB genes in the DNA repair process. Could be a resolvase-invertase protein. The chain is Protein uvp1 (uvp1) from Escherichia coli.